Here is a 53-residue protein sequence, read N- to C-terminus: UPF0391 membrane protein Bcep18194_C7021 (53 aa).

A run of 2 helical transmembrane segments spans residues 5 to 25 and 30 to 50; these read AVIFFIIAIVAAVFGFGGIAA and IAKILFYIFVVIFLVTLLLGV.

Belongs to the UPF0391 family.

The protein resides in the cell membrane. In Burkholderia lata (strain ATCC 17760 / DSM 23089 / LMG 22485 / NCIMB 9086 / R18194 / 383), this protein is UPF0391 membrane protein Bcep18194_C7021.